The following is a 309-amino-acid chain: Probable ABC transporter permease protein YqgH (309 aa).

6 helical membrane-spanning segments follow: residues 30-50 (MIVTACALIMIAASVAITIFL), 88-108 (FIFGSFAVTILSALIAAPLGI), 133-153 (LVGIPSVVYGFIGLTVLVPFI), 165-185 (LLAGTIVLSVMILPTITSISA), 214-234 (LVPAAFPTLMTAVVLGMARAF), and 280-300 (NTLWSMGLVLLVMSFLFILLI). Positions 89–300 (IFGSFAVTIL…VMSFLFILLI (212 aa)) constitute an ABC transmembrane type-1 domain.

It belongs to the binding-protein-dependent transport system permease family. CysTW subfamily.

The protein localises to the cell membrane. Its function is as follows. Part of the binding-protein-dependent transport system YqgGHIJK. Probably responsible for the translocation of the substrate across the membrane. The sequence is that of Probable ABC transporter permease protein YqgH (yqgH) from Bacillus subtilis (strain 168).